The sequence spans 628 residues: MSFSEFYQRSINEPEQFWAEQARRIDWQTPFTQTLDHSNPPFARWFCEGRTNLCHNAIDRWLEKQPEALALIAVSSETEEERTFTFRQLHDEVNAVASMLRSLGVQRGDRVLVYMPMIAEAHITLLACARIGAIHSVVFGGFASHSVAARIDDAKPVLIVSADAGARGGKIIPYKKLLDDAISQAQHQPRHVLLVDRGLAKMARVSGRDVDFASLRHQHIGARVPVAWLESNETSCILYTSGTTGKPKGVQRDVGGYAVALATSMDTIFGGKAGSVFFCASDIGWVVGHSYIVYAPLLAGMATIVYEGLPTWPDCGVWWTIVEKYQVSRMFSAPTAIRVLKKFPTAEIRKHDLSSLEVLYLAGEPLDEPTASWVSNTLDVPVIDNYWQTESGWPIMAIARGLDDRPTRLGSPGVPMYGYNVQLLNEVTGEPCGVNEKGMLVVEGPLPPGCIQTIWGDDGRFVKTYWSLFSRPVYATFDWGIRDADGYHFILGRTDDVINVAGHRLGTREIEESISSHPGVAEVAVVGVKDALKGQVAVAFVIPKESDSLEDRDVAHSQEKAIMALVDSQIGNFGRPAHVWFVSQLPKTRSGKMLRRTIQAICEGRDPGDLTTIDDPASLDQIRQAMEE.

This sequence belongs to the ATP-dependent AMP-binding enzyme family.

The enzyme catalyses propanoate + ATP + CoA = propanoyl-CoA + AMP + diphosphate. The protein operates within organic acid metabolism; propanoate degradation. Catalyzes the synthesis of propionyl-CoA from propionate and CoA. Also converts acetate to acetyl-CoA but with a lower specific activity. This Escherichia coli (strain K12) protein is Propionate--CoA ligase (prpE).